Reading from the N-terminus, the 225-residue chain is Cytidylate kinase (225 aa).

12 to 20 contacts ATP; sequence GPSGAGKGT.

The protein belongs to the cytidylate kinase family. Type 1 subfamily.

It is found in the cytoplasm. It catalyses the reaction CMP + ATP = CDP + ADP. The catalysed reaction is dCMP + ATP = dCDP + ADP. The chain is Cytidylate kinase from Stenotrophomonas maltophilia (strain R551-3).